The following is a 939-amino-acid chain: cGMP-dependent 3',5'-cyclic phosphodiesterase (939 aa).

G2 is lipidated: N-myristoyl glycine. S-palmitoyl cysteine attachment occurs at residues C5 and C11. Residues 16 to 38 (YPAARPAEPRGQQVFLKPDEPPP) are disordered. A Phosphoserine modification is found at S116. The segment at 197–217 (PEAVQNTSVDASEDQKDEKGY) is disordered. GAF domains are found at residues 236 to 373 (ATSL…HYTG) and 408 to 547 (DVSV…GISI). 3',5'-cyclic GMP-binding residues include S430, D445, I464, Y487, and T498. One can recognise a PDEase domain in the interval 577–901 (SDDEYTKLLH…EHWTKVSHKF (325 aa)). The active-site Proton donor is H655. Zn(2+)-binding residues include H659, H695, D696, and D807. D696 is a Mg(2+) binding site.

The protein belongs to the cyclic nucleotide phosphodiesterase family. PDE2 subfamily. In terms of assembly, homodimer. Zn(2+) is required as a cofactor. Requires Mg(2+) as cofactor. Expressed in brain and liver (at protein level).

Its subcellular location is the cytoplasm. It localises to the mitochondrion matrix. The protein resides in the mitochondrion inner membrane. It is found in the mitochondrion outer membrane. The protein localises to the cell membrane. It catalyses the reaction a nucleoside 3',5'-cyclic phosphate + H2O = a nucleoside 5'-phosphate + H(+). The catalysed reaction is 3',5'-cyclic GMP + H2O = GMP + H(+). It carries out the reaction 3',5'-cyclic AMP + H2O = AMP + H(+). The 3',5'-cyclic-AMP phosphodiesterase activity is stimulated by 3',5'-cyclic GMP. Specifically inhibited by Bay 60-7550. In terms of biological role, cGMP-activated cyclic nucleotide phosphodiesterase with a dual-specificity for the second messengers cAMP and cGMP, which are key regulators of many important physiological processes. Has a higher efficiency with cGMP compared to cAMP. Plays a role in cell growth and migration. Its function is as follows. Regulates mitochondrial cAMP levels and respiration. Involved in the regulation of mitochondria morphology/dynamics and apoptotic cell death via local modulation of cAMP/PKA signaling in the mitochondrion, including the monitoring of local cAMP levels at the outer mitochondrial membrane and of PKA-dependent phosphorylation of DNM1L. The chain is cGMP-dependent 3',5'-cyclic phosphodiesterase from Mus musculus (Mouse).